We begin with the raw amino-acid sequence, 76 residues long: UPF0352 protein PC1_1633 (76 aa).

The protein belongs to the UPF0352 family.

In Pectobacterium carotovorum subsp. carotovorum (strain PC1), this protein is UPF0352 protein PC1_1633.